Here is a 633-residue protein sequence, read N- to C-terminus: Pesticidal crystal protein Cry2Ad (633 aa).

This sequence belongs to the delta endotoxin family.

Functionally, promotes colloidosmotic lysis by binding to the midgut epithelial cells of insects. This chain is Pesticidal crystal protein Cry2Ad (cry2Ad), found in Bacillus thuringiensis.